The chain runs to 225 residues: Biosynthetic peptidoglycan transglycosylase (225 aa).

Residues 8–28 (VLLIFIGAILLIQLWIFSSLV) form a helical membrane-spanning segment.

This sequence belongs to the glycosyltransferase 51 family.

Its subcellular location is the cell inner membrane. The catalysed reaction is [GlcNAc-(1-&gt;4)-Mur2Ac(oyl-L-Ala-gamma-D-Glu-L-Lys-D-Ala-D-Ala)](n)-di-trans,octa-cis-undecaprenyl diphosphate + beta-D-GlcNAc-(1-&gt;4)-Mur2Ac(oyl-L-Ala-gamma-D-Glu-L-Lys-D-Ala-D-Ala)-di-trans,octa-cis-undecaprenyl diphosphate = [GlcNAc-(1-&gt;4)-Mur2Ac(oyl-L-Ala-gamma-D-Glu-L-Lys-D-Ala-D-Ala)](n+1)-di-trans,octa-cis-undecaprenyl diphosphate + di-trans,octa-cis-undecaprenyl diphosphate + H(+). Its pathway is cell wall biogenesis; peptidoglycan biosynthesis. In terms of biological role, peptidoglycan polymerase that catalyzes glycan chain elongation from lipid-linked precursors. In Acinetobacter baumannii (strain ACICU), this protein is Biosynthetic peptidoglycan transglycosylase.